The primary structure comprises 1442 residues: Sulfite reductase [NADPH] subunit beta (1442 aa).

One can recognise a Flavodoxin-like domain in the interval 682 to 831; that stretch reads LHVYYASDGG…AYSEWEPKLW (150 aa). Phosphoserine is present on S903. The [4Fe-4S] cluster site is built by C1300, C1306, C1345, and C1349. A siroheme-binding site is contributed by C1349.

This sequence belongs to the nitrite and sulfite reductase 4Fe-4S domain family. Alpha(2)-beta(2). The alpha component is a flavoprotein, the beta component is a hemoprotein. Requires siroheme as cofactor. It depends on [4Fe-4S] cluster as a cofactor.

The protein localises to the cytoplasm. The catalysed reaction is hydrogen sulfide + 3 NADP(+) + 3 H2O = sulfite + 3 NADPH + 4 H(+). It functions in the pathway sulfur metabolism; hydrogen sulfide biosynthesis; hydrogen sulfide from sulfite (NADPH route): step 1/1. Functionally, catalyzes the reduction of sulfite to sulfide, one of several activities required for the biosynthesis of L-cysteine from sulfate. The sequence is that of Sulfite reductase [NADPH] subunit beta (MET5) from Saccharomyces cerevisiae (strain ATCC 204508 / S288c) (Baker's yeast).